A 180-amino-acid chain; its full sequence is Sperm protein associated with the nucleus on the X chromosome N2 (180 aa).

Disordered stretches follow at residues 1–46 and 64–180; these read MEQP…KTKT and NSNQ…GGED. The segment covering 10-26 has biased composition (basic and acidic residues); the sequence is GEKRKSPCESNNKKNDE. Positions 82-169 are enriched in acidic residues; sequence QEEEDEGLDS…SSQEDEDLDS (88 aa). Positions 170-180 are enriched in low complexity; it reads SEGSSQEGGED.

The protein belongs to the SPAN-X family.

The polypeptide is Sperm protein associated with the nucleus on the X chromosome N2 (SPANXN2) (Homo sapiens (Human)).